We begin with the raw amino-acid sequence, 150 residues long: Aspartate 1-decarboxylase 2 (150 aa).

Ser-24 (schiff-base intermediate with substrate; via pyruvic acid) is an active-site residue. Ser-24 is modified (pyruvic acid (Ser)). Thr-56 provides a ligand contact to substrate. Tyr-57 (proton donor) is an active-site residue. A substrate-binding site is contributed by 72-74 (GAA).

It belongs to the PanD family. As to quaternary structure, heterooctamer of four alpha and four beta subunits. Pyruvate is required as a cofactor. In terms of processing, is synthesized initially as an inactive proenzyme, which is activated by self-cleavage at a specific serine bond to produce a beta-subunit with a hydroxyl group at its C-terminus and an alpha-subunit with a pyruvoyl group at its N-terminus.

It is found in the cytoplasm. It carries out the reaction L-aspartate + H(+) = beta-alanine + CO2. It functions in the pathway cofactor biosynthesis; (R)-pantothenate biosynthesis; beta-alanine from L-aspartate: step 1/1. In terms of biological role, catalyzes the pyruvoyl-dependent decarboxylation of aspartate to produce beta-alanine. The sequence is that of Aspartate 1-decarboxylase 2 from Mesorhizobium japonicum (strain LMG 29417 / CECT 9101 / MAFF 303099) (Mesorhizobium loti (strain MAFF 303099)).